Here is a 224-residue protein sequence, read N- to C-terminus: Aminopyrimidine aminohydrolase (224 aa).

Asp-44 provides a ligand contact to substrate. Cys-135 functions as the Nucleophile in the catalytic mechanism. Tyr-139 and Tyr-165 together coordinate substrate. Glu-207 acts as the Proton donor in catalysis.

The protein belongs to the TenA family. In terms of assembly, homotetramer.

The catalysed reaction is 4-amino-5-aminomethyl-2-methylpyrimidine + H2O = 4-amino-5-hydroxymethyl-2-methylpyrimidine + NH4(+). It carries out the reaction thiamine + H2O = 5-(2-hydroxyethyl)-4-methylthiazole + 4-amino-5-hydroxymethyl-2-methylpyrimidine + H(+). Its pathway is cofactor biosynthesis; thiamine diphosphate biosynthesis. In terms of biological role, catalyzes an amino-pyrimidine hydrolysis reaction at the C5' of the pyrimidine moiety of thiamine compounds, a reaction that is part of a thiamine salvage pathway. Thus, catalyzes the conversion of 4-amino-5-aminomethyl-2-methylpyrimidine to 4-amino-5-hydroxymethyl-2-methylpyrimidine (HMP). To a lesser extent, is also able to catalyze the hydrolytic cleavage of thiamine; however, this thiaminase activity is unlikely to be physiologically relevant. Therefore, is involved in the regeneration of the thiamine pyrimidine from thiamine degraded products present in the environment, rather than in thiamine degradation. The polypeptide is Aminopyrimidine aminohydrolase (Halalkalibacterium halodurans (strain ATCC BAA-125 / DSM 18197 / FERM 7344 / JCM 9153 / C-125) (Bacillus halodurans)).